The following is a 104-amino-acid chain: MATIEFSPGIPEVPTQVRLLKSKTGKRGSAIFRFEELKSDTQSILGMRMIDEEGELTTRNIKAKFLNGEFKALEVIYDMETEAEWERFLRFMERFSAANQMGMA.

This sequence belongs to the Psb28 family. In terms of assembly, part of the photosystem II complex.

The protein resides in the cellular thylakoid membrane. This is Photosystem II reaction center Psb28 protein from Synechococcus sp. (strain JA-3-3Ab) (Cyanobacteria bacterium Yellowstone A-Prime).